Reading from the N-terminus, the 246-residue chain is Homeobox protein Crxos (246 aa).

2 consecutive DNA-binding regions (homeobox) follow at residues 22–72 (WEQL…EMRP) and 129–182 (ELTD…RGYR). A Nuclear localization signal motif is present at residues 163-177 (RKDLIRSWFITQRHR).

This sequence belongs to the paired homeobox family. As to expression, specifically expressed during the preimplantation stages of embryonic development, between the four-cell to eight-cell stage and the morula stage. Expressed in adult testis. Detected in early embryos; expression decreases gradually with embryonic development. Also expressed in extraembryonic tissues after E14.5, expression level increases drastically until E18.5, immediately before partum.

Its subcellular location is the nucleus. Functionally, transcription factor that acts as a regulator of embryonic stem cell differentiation during the preimplantation stages of embryonic development. Its function is as follows. Transcription factor that acts as a positive regulator of embryonic stem cell differentiation. In terms of biological role, transcription factor that promotes embryonic stem cell pluripotency. Transcription factor that promotes embryonic stem cell pluripotency. Also involved in extraembryonic tissues development by promoting the expression of placental prolactin family genes. This is Homeobox protein Crxos from Mus musculus (Mouse).